The sequence spans 175 residues: uncharacterized protein (175 aa).

A run of 2 helical transmembrane segments spans residues 21–41 (IVLDFPSFLVGCVFTTMMGPI) and 50–70 (LVGLITVCKFLVIIGSIVFVI).

Its subcellular location is the membrane. This is an uncharacterized protein from Saccharomyces cerevisiae (strain ATCC 204508 / S288c) (Baker's yeast).